Consider the following 333-residue polypeptide: Biotin synthase (333 aa).

One can recognise a Radical SAM core domain in the interval 51–281; sequence HFGNQVSLCG…DVHITICGGR (231 aa). The [4Fe-4S] cluster site is built by C69, C73, and C76. A [2Fe-2S] cluster-binding site is contributed by C206.

This sequence belongs to the radical SAM superfamily. Biotin synthase family. Homodimer. [4Fe-4S] cluster serves as cofactor. [2Fe-2S] cluster is required as a cofactor.

The catalysed reaction is (4R,5S)-dethiobiotin + (sulfur carrier)-SH + 2 reduced [2Fe-2S]-[ferredoxin] + 2 S-adenosyl-L-methionine = (sulfur carrier)-H + biotin + 2 5'-deoxyadenosine + 2 L-methionine + 2 oxidized [2Fe-2S]-[ferredoxin]. The protein operates within cofactor biosynthesis; biotin biosynthesis; biotin from 7,8-diaminononanoate: step 2/2. In terms of biological role, catalyzes the conversion of dethiobiotin (DTB) to biotin by the insertion of a sulfur atom into dethiobiotin via a radical-based mechanism. This Trichlorobacter lovleyi (strain ATCC BAA-1151 / DSM 17278 / SZ) (Geobacter lovleyi) protein is Biotin synthase.